The sequence spans 357 residues: Peptide chain release factor 1 (357 aa).

Q236 carries the N5-methylglutamine modification.

Belongs to the prokaryotic/mitochondrial release factor family. Post-translationally, methylated by PrmC. Methylation increases the termination efficiency of RF1.

The protein resides in the cytoplasm. Functionally, peptide chain release factor 1 directs the termination of translation in response to the peptide chain termination codons UAG and UAA. This chain is Peptide chain release factor 1, found in Mycobacterium ulcerans (strain Agy99).